An 892-amino-acid chain; its full sequence is Translation initiation factor IF-2 (892 aa).

A disordered region spans residues 51–296; it reads REHGSAPNKL…KGKRKPSTLQ (246 aa). Positions 68–82 are enriched in polar residues; it reads STLNIPSTGGKSKSV. Over residues 99–217 the composition is skewed to basic and acidic residues; that stretch reads EQAKAEEQAQ…KMAAENEGKW (119 aa). Over residues 224 to 237 the composition is skewed to polar residues; the sequence is QTESADYHVTTSQH. Residues 239 to 254 are compositionally biased toward basic and acidic residues; the sequence is RAAEDENDAKVEGDRR. The span at 255–269 shows a compositional bias: basic residues; sequence SRTRGGKATKQKKGN. Residues 270-283 are compositionally biased toward basic and acidic residues; the sequence is KLSESKADREEARA. Residues 391 to 560 form the tr-type G domain; that stretch reads HRAPVVTIMG…LLQAEVMELK (170 aa). The G1 stretch occupies residues 400–407; that stretch reads GHVDHGKT. 400 to 407 serves as a coordination point for GTP; that stretch reads GHVDHGKT. The G2 stretch occupies residues 425–429; sequence GITQH. The interval 446 to 449 is G3; that stretch reads DTPG. GTP-binding positions include 446–450 and 500–503; these read DTPGH and NKID. Residues 500 to 503 are G4; sequence NKID. The G5 stretch occupies residues 536–538; sequence SAK.

It belongs to the TRAFAC class translation factor GTPase superfamily. Classic translation factor GTPase family. IF-2 subfamily.

The protein resides in the cytoplasm. In terms of biological role, one of the essential components for the initiation of protein synthesis. Protects formylmethionyl-tRNA from spontaneous hydrolysis and promotes its binding to the 30S ribosomal subunits. Also involved in the hydrolysis of GTP during the formation of the 70S ribosomal complex. In Yersinia enterocolitica serotype O:8 / biotype 1B (strain NCTC 13174 / 8081), this protein is Translation initiation factor IF-2.